The primary structure comprises 141 residues: Large ribosomal subunit protein uL11 (141 aa).

Belongs to the universal ribosomal protein uL11 family. In terms of assembly, part of the ribosomal stalk of the 50S ribosomal subunit. Interacts with L10 and the large rRNA to form the base of the stalk. L10 forms an elongated spine to which L12 dimers bind in a sequential fashion forming a multimeric L10(L12)X complex. One or more lysine residues are methylated.

Its function is as follows. Forms part of the ribosomal stalk which helps the ribosome interact with GTP-bound translation factors. This chain is Large ribosomal subunit protein uL11, found in Prosthecochloris aestuarii (strain DSM 271 / SK 413).